The primary structure comprises 220 residues: 7-cyano-7-deazaguanine synthase (220 aa).

10-20 (FSGGQDSTTCL) is an ATP binding site. Positions 186, 195, 198, and 201 each coordinate Zn(2+).

It belongs to the QueC family. As to quaternary structure, homodimer. Zn(2+) is required as a cofactor.

It carries out the reaction 7-carboxy-7-deazaguanine + NH4(+) + ATP = 7-cyano-7-deazaguanine + ADP + phosphate + H2O + H(+). It participates in purine metabolism; 7-cyano-7-deazaguanine biosynthesis. In terms of biological role, catalyzes the ATP-dependent conversion of 7-carboxy-7-deazaguanine (CDG) to 7-cyano-7-deazaguanine (preQ(0)). In Bacillus cereus (strain B4264), this protein is 7-cyano-7-deazaguanine synthase.